The primary structure comprises 251 residues: DNA repair protein RecO (251 aa).

This sequence belongs to the RecO family.

Its function is as follows. Involved in DNA repair and RecF pathway recombination. The sequence is that of DNA repair protein RecO from Lactococcus lactis subsp. cremoris (strain SK11).